The following is a 396-amino-acid chain: Elongation factor Tu (396 aa).

Residues 10-206 form the tr-type G domain; sequence KPHVNVGTIG…AMDEYIPTPE (197 aa). A G1 region spans residues 19-26; sequence GHVDHGKT. Position 19–26 (19–26) interacts with GTP; the sequence is GHVDHGKT. T26 is a Mg(2+) binding site. The tract at residues 60 to 64 is G2; that stretch reads GITIA. Residues 81–84 form a G3 region; the sequence is DCPG. Residues 81-85 and 136-139 contribute to the GTP site; these read DCPGH and NKAD. The G4 stretch occupies residues 136-139; that stretch reads NKAD. The G5 stretch occupies residues 174 to 176; it reads SAL.

It belongs to the TRAFAC class translation factor GTPase superfamily. Classic translation factor GTPase family. EF-Tu/EF-1A subfamily. In terms of assembly, monomer.

The protein localises to the cytoplasm. It carries out the reaction GTP + H2O = GDP + phosphate + H(+). Its function is as follows. GTP hydrolase that promotes the GTP-dependent binding of aminoacyl-tRNA to the A-site of ribosomes during protein biosynthesis. This is Elongation factor Tu from Alkalilimnicola ehrlichii (strain ATCC BAA-1101 / DSM 17681 / MLHE-1).